Here is a 280-residue protein sequence, read N- to C-terminus: 3-deoxy-manno-octulosonate cytidylyltransferase (280 aa).

It belongs to the KdsB family.

The protein localises to the cytoplasm. It carries out the reaction 3-deoxy-alpha-D-manno-oct-2-ulosonate + CTP = CMP-3-deoxy-beta-D-manno-octulosonate + diphosphate. Its pathway is nucleotide-sugar biosynthesis; CMP-3-deoxy-D-manno-octulosonate biosynthesis; CMP-3-deoxy-D-manno-octulosonate from 3-deoxy-D-manno-octulosonate and CTP: step 1/1. It participates in bacterial outer membrane biogenesis; lipopolysaccharide biosynthesis. Its function is as follows. Activates KDO (a required 8-carbon sugar) for incorporation into bacterial lipopolysaccharide in Gram-negative bacteria. The protein is 3-deoxy-manno-octulosonate cytidylyltransferase of Colwellia psychrerythraea (strain 34H / ATCC BAA-681) (Vibrio psychroerythus).